The primary structure comprises 359 residues: Alpha-N-acetylneuraminide alpha-2,8-sialyltransferase (359 aa).

Residues 1-28 (MWGRWRGAGGRRGVAQPVIPQMKLLGGR) lie on the Cytoplasmic side of the membrane. The chain crosses the membrane as a helical; Signal-anchor for type II membrane protein span at residues 29-49 (VPLGASALGLLIVCWFYIFPG). At 50-359 (GERLPGHKEM…KKDVSSKKPH (310 aa)) the chain is on the lumenal side. N-linked (GlcNAc...) asparagine glycosylation is found at N73 and N121. Intrachain disulfides connect C140-C289 and C154-C349. CMP-N-acetyl-beta-neuraminate is bound by residues N145 and N168. An N-linked (GlcNAc...) asparagine glycan is attached at N247. 5 residues coordinate CMP-N-acetyl-beta-neuraminate: S276, T277, G278, W298, and H312. The active-site Proton donor/acceptor is H324.

The protein belongs to the glycosyltransferase 29 family. As to expression, expressed in the dorsal blastopore lip and in the presumptive neuroectoderm in stage 11 embryos. During gastrulation, strongly expressed in the involuting mesoderm. At stages 13 and 16, expressed in the neural plate and neural fold, paraxial mesoderm and notochord. At stages 19 and 22 (neural tube and early tailbud), strongly expressed in the neural tube and notochord. At the tadpole stage, expressed in the head region, branchial arches and otic and optic primordia. Also localized in the notochord and weakly expressed in the somites. In adults, expressed in the brain and ovary. Isoform 2 (short) is expressed at a low level in the adult testis and muscle, and at a high level in the skin. Isoform 1 (long) is expressed at a high level in the adult lung and kidney. Both isoforms 1 and 2 are expressed in the gut and liver.

The protein resides in the golgi apparatus membrane. The catalysed reaction is an N-acetyl-alpha-neuraminyl-(2-&gt;3)-beta-D-galactosyl derivative + CMP-N-acetyl-beta-neuraminate = an N-acetyl-alpha-neuraminyl-(2-&gt;8)-N-acetyl-alpha-neuraminyl-(2-&gt;3)-beta-D-galactosyl derivative + CMP + H(+). The enzyme catalyses a ganglioside GM3 (d18:1(4E)) + CMP-N-acetyl-beta-neuraminate = a ganglioside GD3 (d18:1(4E)) + CMP + H(+). It carries out the reaction a ganglioside GD3 (d18:1(4E)) + CMP-N-acetyl-beta-neuraminate = a ganglioside GT3 (d18:1(4E)) + CMP + H(+). It catalyses the reaction a ganglioside GD1a (d18:1(4E)) + CMP-N-acetyl-beta-neuraminate = a ganglioside GT1a (d18:1(4E)) + CMP + H(+). The catalysed reaction is a ganglioside GT1b (d18:1(4E)) + CMP-N-acetyl-beta-neuraminate = a ganglioside GQ1b (d18:1(4E)) + CMP + H(+). The enzyme catalyses a ganglioside GM1b (d18:1(4E)) + CMP-N-acetyl-beta-neuraminate = a ganglioside GD1c (d18:1(4E)) + CMP + H(+). It carries out the reaction a ganglioside GD3 + CMP-N-acetyl-beta-neuraminate = a ganglioside GT3 + CMP + H(+). It catalyses the reaction [alpha-N-acetylneuraminyl-(2-&gt;8)](n)-alpha-N-acetylneuraminyl-(2-&gt;8)-alpha-N-acetylneuraminyl-(2-&gt;3)-beta-D-galactosyl-(1-&gt;4)-beta-D-glucosyl-(1&lt;-&gt;1)-ceramide + CMP-N-acetyl-beta-neuraminate = [alpha-N-acetylneuraminyl-(2-&gt;8)](n+1)-alpha-N-acetylneuraminyl-(2-&gt;8)-alpha-N-acetylneuraminyl-(2-&gt;3)-beta-D-galactosyl-(1-&gt;4)-beta-D-glucosyl-(1&lt;-&gt;1)-ceramide + CMP + H(+). Its pathway is protein modification; protein glycosylation. The protein operates within lipid metabolism; sphingolipid metabolism. In terms of biological role, catalyzes the addition of sialic acid in alpha 2,8-linkage to the sialic acid moiety of the ganglioside GM3 to form ganglioside GD3; gangliosides are a subfamily of complex glycosphingolipds that contain one or more residues of sialic acid. Glycosphingolipids are required for convergence extension movements during early development. Can catalyze the addition of a second alpha-2,8- sialic acid to GD3 to form GT3. Can use GM1b, GD1a and GT1b as acceptor substrates to synthesize GD1c, GT1a and GQ1b respectively. The protein is Alpha-N-acetylneuraminide alpha-2,8-sialyltransferase of Xenopus laevis (African clawed frog).